The primary structure comprises 403 residues: Phosphoglycerate kinase (403 aa).

Residues 22-24, Arg37, 60-63, Arg119, and Arg156 each bind substrate; these read DLN and HLGR. ATP contacts are provided by residues Lys206, Gly302, Glu333, and 359–362; that span reads GGDS.

The protein belongs to the phosphoglycerate kinase family. In terms of assembly, monomer.

The protein resides in the cytoplasm. The catalysed reaction is (2R)-3-phosphoglycerate + ATP = (2R)-3-phospho-glyceroyl phosphate + ADP. It functions in the pathway carbohydrate degradation; glycolysis; pyruvate from D-glyceraldehyde 3-phosphate: step 2/5. This is Phosphoglycerate kinase (pgk) from Streptomyces coelicolor (strain ATCC BAA-471 / A3(2) / M145).